A 97-amino-acid polypeptide reads, in one-letter code: HssA/B-like protein 27 (97 aa).

Belongs to the hssA/B family.

The polypeptide is HssA/B-like protein 27 (hssl27) (Dictyostelium discoideum (Social amoeba)).